We begin with the raw amino-acid sequence, 257 residues long: UPF0246 protein Ssed_1188 (257 aa).

It belongs to the UPF0246 family.

The polypeptide is UPF0246 protein Ssed_1188 (Shewanella sediminis (strain HAW-EB3)).